A 1015-amino-acid chain; its full sequence is Condensin complex subunit 3 (1015 aa).

HEAT repeat units lie at residues 94–131 (GLLNYLFTFLLKSHEANSNAVRFRVCLLINKLLGSMPE), 138–173 (DVFDKINKAMLIRLKDKIPNVRIQAVLALSRLQDPK), 174–212 (DDECPVVNAYATLIENDSNPEVRRAVLSCIAPSAKTLPK), 238–275 (MRAMSIAQRVMLLQQGLNDRSDAVKQAMQKHLLQGWLR), and 276–313 (FSEGNILELLHRLDVENSSEVAVSVLNALFSITPLSEL). Residue S390 is modified to Phosphoserine. 3 HEAT repeats span residues 399-436 (EFIGQQLILIIKSLDTSEEGGRKKLLAVLQEILILPTI), 439-478 (SLVSFLVERLLHIIIDDNKRTQIVTEIISEIRAPIVTVGV), and 617-654 (DFARKHFVLLLQVLQIDDVTIKISALKAIFDQLMTFGI). S674 carries the post-translational modification Phosphoserine. HEAT repeat units lie at residues 687-724 (ATAKNVLKLLSDFLDSEVSELRTGAAEGLAKLMFSGLL) and 865-907 (KDLL…QAEA). T931 carries the post-translational modification Phosphothreonine. The segment covering 941 to 950 (ASKSTQLKTN) has biased composition (polar residues). The interval 941–994 (ASKSTQLKTNRGQRKVTVSARTNRRCQTAEADSESDHEVPEPESEMKMRLPRRA) is disordered. S973, S975, S1002, and S1015 each carry phosphoserine. Positions 974-988 (ESDHEVPEPESEMKM) are enriched in basic and acidic residues.

It belongs to the CND3 (condensin subunit 3) family. As to quaternary structure, component of the condensin complex, which contains the SMC2 and SMC4 heterodimer, and three non SMC subunits that probably regulate the complex: NCAPH/BRRN1, NCAPD2/CAPD2 and NCAPG. Phosphorylated by CDK1. Its phosphorylation, as well as that of NCAPD2 and NCAPH subunits, activates the condensin complex and is required for chromosome condensation. Highly expressed in testis.

It localises to the nucleus. Its subcellular location is the cytoplasm. The protein localises to the chromosome. Regulatory subunit of the condensin complex, a complex required for conversion of interphase chromatin into mitotic-like condense chromosomes. The condensin complex probably introduces positive supercoils into relaxed DNA in the presence of type I topoisomerases and converts nicked DNA into positive knotted forms in the presence of type II topoisomerases. The protein is Condensin complex subunit 3 (NCAPG) of Homo sapiens (Human).